The sequence spans 161 residues: 6,7-dimethyl-8-ribityllumazine synthase (161 aa).

Residues Trp31, 63–65, and 85–87 each bind 5-amino-6-(D-ribitylamino)uracil; these read SFE and VVI. Position 90–91 (90–91) interacts with (2S)-2-hydroxy-3-oxobutyl phosphate; that stretch reads GT. The Proton donor role is filled by His93. Phe118 provides a ligand contact to 5-amino-6-(D-ribitylamino)uracil. Arg132 is a (2S)-2-hydroxy-3-oxobutyl phosphate binding site.

The protein belongs to the DMRL synthase family.

It catalyses the reaction (2S)-2-hydroxy-3-oxobutyl phosphate + 5-amino-6-(D-ribitylamino)uracil = 6,7-dimethyl-8-(1-D-ribityl)lumazine + phosphate + 2 H2O + H(+). It functions in the pathway cofactor biosynthesis; riboflavin biosynthesis; riboflavin from 2-hydroxy-3-oxobutyl phosphate and 5-amino-6-(D-ribitylamino)uracil: step 1/2. Catalyzes the formation of 6,7-dimethyl-8-ribityllumazine by condensation of 5-amino-6-(D-ribitylamino)uracil with 3,4-dihydroxy-2-butanone 4-phosphate. This is the penultimate step in the biosynthesis of riboflavin. The sequence is that of 6,7-dimethyl-8-ribityllumazine synthase from Pseudarthrobacter chlorophenolicus (strain ATCC 700700 / DSM 12829 / CIP 107037 / JCM 12360 / KCTC 9906 / NCIMB 13794 / A6) (Arthrobacter chlorophenolicus).